The sequence spans 231 residues: 5'-methylthioadenosine/S-adenosylhomocysteine nucleosidase (231 aa).

Glutamate 12 acts as the Proton acceptor in catalysis. Substrate is bound by residues glycine 78, isoleucine 153, and 174-175 (ME). The active-site Proton donor is the aspartate 198.

It belongs to the PNP/UDP phosphorylase family. MtnN subfamily.

The enzyme catalyses S-adenosyl-L-homocysteine + H2O = S-(5-deoxy-D-ribos-5-yl)-L-homocysteine + adenine. It carries out the reaction S-methyl-5'-thioadenosine + H2O = 5-(methylsulfanyl)-D-ribose + adenine. It catalyses the reaction 5'-deoxyadenosine + H2O = 5-deoxy-D-ribose + adenine. It functions in the pathway amino-acid biosynthesis; L-methionine biosynthesis via salvage pathway; S-methyl-5-thio-alpha-D-ribose 1-phosphate from S-methyl-5'-thioadenosine (hydrolase route): step 1/2. Catalyzes the irreversible cleavage of the glycosidic bond in both 5'-methylthioadenosine (MTA) and S-adenosylhomocysteine (SAH/AdoHcy) to adenine and the corresponding thioribose, 5'-methylthioribose and S-ribosylhomocysteine, respectively. Also cleaves 5'-deoxyadenosine, a toxic by-product of radical S-adenosylmethionine (SAM) enzymes, into 5-deoxyribose and adenine. The protein is 5'-methylthioadenosine/S-adenosylhomocysteine nucleosidase of Shewanella putrefaciens (strain CN-32 / ATCC BAA-453).